A 220-amino-acid chain; its full sequence is Translation initiation factor 6 (220 aa).

This sequence belongs to the eIF-6 family.

Binds to the 50S ribosomal subunit and prevents its association with the 30S ribosomal subunit to form the 70S initiation complex. This Pyrobaculum aerophilum (strain ATCC 51768 / DSM 7523 / JCM 9630 / CIP 104966 / NBRC 100827 / IM2) protein is Translation initiation factor 6.